The sequence spans 314 residues: Homoserine O-acetyltransferase (314 aa).

Catalysis depends on C142, which acts as the Acyl-thioester intermediate. Residues K163 and S192 each coordinate substrate. The Proton acceptor role is filled by H235. E237 is an active-site residue. R249 contributes to the substrate binding site.

The protein belongs to the MetA family.

It localises to the cytoplasm. The enzyme catalyses L-homoserine + acetyl-CoA = O-acetyl-L-homoserine + CoA. It functions in the pathway amino-acid biosynthesis; L-methionine biosynthesis via de novo pathway; O-acetyl-L-homoserine from L-homoserine: step 1/1. Functionally, transfers an acetyl group from acetyl-CoA to L-homoserine, forming acetyl-L-homoserine. The sequence is that of Homoserine O-acetyltransferase from Azobacteroides pseudotrichonymphae genomovar. CFP2.